The chain runs to 1168 residues: Zinc finger CCHC domain-containing protein 2 (1168 aa).

Disordered stretches follow at residues 1–87, 209–242, 561–693, and 932–978; these read MLRM…GGHA, EGSR…CAKL, KRSL…LGTE, and ATSA…SDST. A compositionally biased stretch (pro residues) spans 43–66; that stretch reads PPPPPPTGLPRGPPPPPPSPPRGL. Low complexity predominate over residues 67–78; that stretch reads EPPVASGPTAGA. The span at 216 to 227 shows a compositional bias: acidic residues; it reads EDEPGGDDEQDA. Residues 233–242 show a composition bias toward gly residues; it reads GPEGGGCAKL. Positions 574-588 are enriched in basic and acidic residues; sequence PQVEKEKIKKTENRL. A compositionally biased stretch (low complexity) spans 626–635; it reads SSESYSSPSS. Over residues 636–655 the composition is skewed to basic and acidic residues; it reads PRHDGRESLESEEEKDRDTD. A compositionally biased stretch (polar residues) spans 932–949; that stretch reads ATSAQPASTGISPAQSTV. The span at 951–965 shows a compositional bias: pro residues; that stretch reads PAVPTHTPGPAPSPS. Residues 966–978 show a composition bias toward polar residues; that stretch reads PALTHSTAQSDST. The segment at 1121–1138 adopts a CCHC-type zinc-finger fold; it reads VSCYNCGVSGHYAQDCKQ.

This Rattus norvegicus (Rat) protein is Zinc finger CCHC domain-containing protein 2 (Zcchc2).